Consider the following 220-residue polypeptide: MAYRDQPLGELALSIPRASALFRQYDMDYCCGGKQTLARAAARHDVDIDIIEAQLAQLAEQPIEKDWRAVPLADIIDHIVVRYHDRHREQLPELILQATKVERVHADKPNVPRGLTKYLTALHEELSSHMMKEEQILFPMIKQGMGRQATGPISVMESEHDEAGELVDVIKHVTQNVTPPPEACTTWKAMYNGINEMIDDLMEHISLENNVLFPRALAGE.

Belongs to the RIC family. YtfE subfamily. Homodimer.

The protein localises to the cytoplasm. In terms of biological role, di-iron-containing protein involved in the repair of iron-sulfur clusters damaged by oxidative and nitrosative stress conditions. This Salmonella paratyphi A (strain AKU_12601) protein is Iron-sulfur cluster repair protein YtfE.